Here is a 40-residue protein sequence, read N- to C-terminus: Sulfur globule protein TR0 (40 aa).

This sequence to C.vinosum CV1 and CV2. As to quaternary structure, the protein envelope of the sulfur globules is composed of the three different proteins TR0, TR1 and TR2.

Structural protein of the sulfur globules, which are intracellular globules that serve for sulfur storage in purple sulfur bacteria. The chain is Sulfur globule protein TR0 from Thiocapsa roseopersicina.